Consider the following 498-residue polypeptide: MGNCCGSKPLTASDIVSDQKQETILGKPLEDIKKHYSFGDELGKGNFGTTYLCKENSTGKSYACKSIPKRTLSSEEEKEAVKTEIQIMDHVSGQPNIVQIKGSYEDNNSIHIVMELCGGGELFDKIDALVKSHSYYSEKDAAGIFRSIVNAVKICHSLDVVHRDLKPENFLFSSKDENAMLKAIDFGCSVYIKEGKTFERVVGSKYYIAPEVLEGSYGKEIDIWSAGVILYILLSGVPPFQTGIESIIVSTLCIVDAEIKECRLDFESQPWPLISFKAKHLIGKMLTKKPKERISAADVLEHPWMKSEAPDKPIDNVVLSRMKQFRAMNKLKKLALKVIAEGLSEEEIKGLKTMFENMDMDKSGSITYEELKMGLNRHGSKLSETEVKQLMEAADVDGNGTIDYIEFISATMHRHRLERDEHLYKAFQYFDKDGSGHITKEEVEIAMKEHGMGDEANAKDLISEFDKNNDGKIDYEEFCTMMRNGILQPQGKLVGIHI.

Glycine 2 is lipidated: N-myristoyl glycine. In terms of domain architecture, Protein kinase spans tyrosine 36–methionine 305. Residues leucine 42 to threonine 50 and lysine 65 contribute to the ATP site. Aspartate 164 (proton acceptor) is an active-site residue. The residue at position 204 (serine 204) is a Phosphoserine. Residues alanine 309–isoleucine 339 form an autoinhibitory domain region. EF-hand domains lie at glutamate 346 to lysine 381, leucine 382 to leucine 417, glutamate 418 to glycine 453, and aspartate 454 to glutamine 488. Ca(2+) contacts are provided by aspartate 359, aspartate 361, serine 363, serine 365, glutamate 370, aspartate 395, aspartate 397, asparagine 399, threonine 401, glutamate 406, aspartate 431, aspartate 433, serine 435, histidine 437, glutamate 442, aspartate 466, asparagine 468, aspartate 470, lysine 472, and glutamate 477.

Belongs to the protein kinase superfamily. Ser/Thr protein kinase family. CDPK subfamily.

Its subcellular location is the membrane. The enzyme catalyses L-seryl-[protein] + ATP = O-phospho-L-seryl-[protein] + ADP + H(+). The catalysed reaction is L-threonyl-[protein] + ATP = O-phospho-L-threonyl-[protein] + ADP + H(+). With respect to regulation, activated by calcium. Autophosphorylation may play an important role in the regulation of the kinase activity. Functionally, may play a role in signal transduction pathways that involve calcium as a second messenger. This chain is Calcium-dependent protein kinase 22 (CPK22), found in Arabidopsis thaliana (Mouse-ear cress).